The chain runs to 804 residues: Phenylalanine--tRNA ligase beta subunit (804 aa).

The region spanning 38–148 is the tRNA-binding domain; that stretch reads RSSLKGFVIA…EDAPIGGLFA (111 aa). A B5 domain is found at 401–476; it reads PEIKQIAFPF…RIYGLDKIEP (76 aa). Mg(2+) contacts are provided by Asp454, Asp460, Glu463, and Glu464. One can recognise an FDX-ACB domain in the interval 710–803; that stretch reads SPFQMVRRDF…VTKATGAYLR (94 aa).

This sequence belongs to the phenylalanyl-tRNA synthetase beta subunit family. Type 1 subfamily. As to quaternary structure, tetramer of two alpha and two beta subunits. Mg(2+) serves as cofactor.

The protein resides in the cytoplasm. The enzyme catalyses tRNA(Phe) + L-phenylalanine + ATP = L-phenylalanyl-tRNA(Phe) + AMP + diphosphate + H(+). The polypeptide is Phenylalanine--tRNA ligase beta subunit (Bartonella quintana (strain Toulouse) (Rochalimaea quintana)).